The primary structure comprises 124 residues: uncharacterized protein (124 aa).

The interval 44 to 92 (DRVENSGNGTGSISAPLTDLGPSIGDSHENKGADIPIHPPLDTQSHAKD) is disordered. Polar residues predominate over residues 48–58 (NSGNGTGSISA).

This is an uncharacterized protein from Caenorhabditis elegans.